We begin with the raw amino-acid sequence, 428 residues long: Cholecystokinin receptor type A (428 aa).

The Extracellular segment spans residues 1-41 (MDVVDSLLVNGSNITPPCELGLENETLFCLDQPRPSKEWQP). Asn10 and Asn24 each carry an N-linked (GlcNAc...) asparagine glycan. Cysteines 18 and 29 form a disulfide. Residues 42–67 (AVQILLYSLIFLLSVLGNTLVITVLI) form a helical membrane-spanning segment. At 68 to 77 (RNKRMRTVTN) the chain is on the cytoplasmic side. A helical transmembrane segment spans residues 78–104 (IFLLSLAVSDLMLCLFCMPFNLIPNLL). Residues 105–115 (KDFIFGSAVCK) lie on the Extracellular side of the membrane. A disulfide bridge links Cys114 with Cys196. Residues 116 to 137 (TTTYFMGTSVSVSTFNLVAISL) form a helical membrane-spanning segment. Residues 138 to 157 (ERYGAICKPLQSRVWQTKSH) lie on the Cytoplasmic side of the membrane. Residues 158–178 (ALKVIAATWCLSFTIMTPYPI) form a helical membrane-spanning segment. Over 179–210 (YSNLVPFTKNNNQTANMCRFLLPNDVMQQSWH) the chain is Extracellular. Asn190 is a glycosylation site (N-linked (GlcNAc...) asparagine). A helical transmembrane segment spans residues 211-234 (TFLLLILFLIPGIVMMVAYGLISL). At 235–313 (ELYQGIKFEA…NLMAKKRVIR (79 aa)) the chain is on the cytoplasmic side. The disordered stretch occupies residues 248–272 (KSAKERKPSTTSSGKYEDSDGCYLQ). A helical membrane pass occupies residues 314–334 (MLIVIVVLFFLCWMPIFSANA). Over 335–349 (WRAYDTASAERRLSG) the chain is Extracellular. A helical membrane pass occupies residues 350-373 (TPISFILLLSYTSSCVNPIIYCFM). Topologically, residues 374-428 (NKRFRLGFMATFPCCPNPGPPGARGEVGEEEEGGTTGASLSRFSYSHMSASVPPQ) are cytoplasmic. A lipid anchor (S-palmitoyl cysteine) is attached at Cys387. Residues 394 to 428 (PGARGEVGEEEEGGTTGASLSRFSYSHMSASVPPQ) form a disordered region. The span at 411–422 (ASLSRFSYSHMS) shows a compositional bias: polar residues.

It belongs to the G-protein coupled receptor 1 family.

Its subcellular location is the cell membrane. Functionally, receptor for cholecystokinin. Mediates pancreatic growth and enzyme secretion, smooth muscle contraction of the gall bladder and stomach. Has a 1000-fold higher affinity for CCK rather than for gastrin. It modulates feeding and dopamine-induced behavior in the central and peripheral nervous system. This receptor mediates its action by association with G proteins that activate a phosphatidylinositol-calcium second messenger system. This chain is Cholecystokinin receptor type A (CCKAR), found in Homo sapiens (Human).